Here is a 275-residue protein sequence, read N- to C-terminus: Small ribosomal subunit protein uS3 (275 aa).

One can recognise a KH type-2 domain in the interval 38–106; that stretch reads IRRMMTSGME…QVQLNILEVK (69 aa). Low complexity predominate over residues 216–228; it reads NAAARAGNRPARG. A disordered region spans residues 216 to 275; it reads NAAARAGNRPARGGADRPARGGRGGERGGRGRKPQQAPAAEAPKAEAPAAAPAESTGTEA. Over residues 229–244 the composition is skewed to basic and acidic residues; it reads GADRPARGGRGGERGG. Residues 249 to 268 are compositionally biased toward low complexity; the sequence is PQQAPAAEAPKAEAPAAAPA.

This sequence belongs to the universal ribosomal protein uS3 family. In terms of assembly, part of the 30S ribosomal subunit. Forms a tight complex with proteins S10 and S14.

Its function is as follows. Binds the lower part of the 30S subunit head. Binds mRNA in the 70S ribosome, positioning it for translation. This Streptomyces avermitilis (strain ATCC 31267 / DSM 46492 / JCM 5070 / NBRC 14893 / NCIMB 12804 / NRRL 8165 / MA-4680) protein is Small ribosomal subunit protein uS3.